Reading from the N-terminus, the 300-residue chain is uncharacterized protein (300 aa).

The first 22 residues, 1–22 (MKSFVWTLLGALSLGSLTTAYG), serve as a signal peptide directing secretion.

It is found in the endoplasmic reticulum. This is an uncharacterized protein from Schizosaccharomyces pombe (strain 972 / ATCC 24843) (Fission yeast).